A 351-amino-acid chain; its full sequence is Dihydroorotate dehydrogenase (quinone) (351 aa).

Residues 67-71 (AGFDK) and threonine 91 contribute to the FMN site. Lysine 71 contributes to the substrate binding site. 116–120 (NAMGF) is a binding site for substrate. Residues asparagine 145 and asparagine 178 each contribute to the FMN site. Substrate is bound at residue asparagine 178. Serine 181 acts as the Nucleophile in catalysis. Residue asparagine 183 coordinates substrate. 2 residues coordinate FMN: lysine 214 and threonine 242. 243 to 244 (NT) serves as a coordination point for substrate. FMN contacts are provided by residues glycine 262, glycine 291, and 312–313 (YS).

It belongs to the dihydroorotate dehydrogenase family. Type 2 subfamily. As to quaternary structure, monomer. Requires FMN as cofactor.

Its subcellular location is the cell membrane. It carries out the reaction (S)-dihydroorotate + a quinone = orotate + a quinol. Its pathway is pyrimidine metabolism; UMP biosynthesis via de novo pathway; orotate from (S)-dihydroorotate (quinone route): step 1/1. Functionally, catalyzes the conversion of dihydroorotate to orotate with quinone as electron acceptor. This chain is Dihydroorotate dehydrogenase (quinone) (pyrD), found in Helicobacter pylori (strain J99 / ATCC 700824) (Campylobacter pylori J99).